The following is a 113-amino-acid chain: Small ribosomal subunit protein mS41 (113 aa).

Residues 1–22 (MLILKRIFIIRNFIFPFSNCRY) constitute a mitochondrion transit peptide.

Belongs to the mitochondrion-specific ribosomal protein mS41 family. As to quaternary structure, component of the mitochondrial small ribosomal subunit (mt-SSU). Mature yeast 74S mitochondrial ribosomes consist of a small (37S) and a large (54S) subunit. The 37S small subunit contains a 15S ribosomal RNA (15S mt-rRNA) and at least 32 different proteins. The 54S large subunit contains a 21S rRNA (21S mt-rRNA) and at least 45 different proteins.

The protein resides in the mitochondrion. In terms of biological role, component of the mitochondrial ribosome (mitoribosome), a dedicated translation machinery responsible for the synthesis of mitochondrial genome-encoded proteins, including at least some of the essential transmembrane subunits of the mitochondrial respiratory chain. The mitoribosomes are attached to the mitochondrial inner membrane and translation products are cotranslationally integrated into the membrane. mS41 is involved in telomere length regulation. This Schizosaccharomyces pombe (strain 972 / ATCC 24843) (Fission yeast) protein is Small ribosomal subunit protein mS41 (fyv4).